The chain runs to 374 residues: Probable dual-specificity RNA methyltransferase RlmN (374 aa).

Basic and acidic residues predominate over residues 1-17 (MEKNEISEERRTQEKEK). The interval 1–22 (MEKNEISEERRTQEKEKQHGHR) is disordered. The active-site Proton acceptor is the E119. Residues 125–360 (SEERITACIS…VTVRKSQGAT (236 aa)) form the Radical SAM core domain. A disulfide bridge links C132 with C365. [4Fe-4S] cluster is bound by residues C139, C143, and C146. S-adenosyl-L-methionine is bound by residues 190 to 191 (GE), S223, 246 to 248 (SLH), and N322. The active-site S-methylcysteine intermediate is the C365.

Belongs to the radical SAM superfamily. RlmN family. It depends on [4Fe-4S] cluster as a cofactor.

The protein localises to the cytoplasm. The enzyme catalyses adenosine(2503) in 23S rRNA + 2 reduced [2Fe-2S]-[ferredoxin] + 2 S-adenosyl-L-methionine = 2-methyladenosine(2503) in 23S rRNA + 5'-deoxyadenosine + L-methionine + 2 oxidized [2Fe-2S]-[ferredoxin] + S-adenosyl-L-homocysteine. It carries out the reaction adenosine(37) in tRNA + 2 reduced [2Fe-2S]-[ferredoxin] + 2 S-adenosyl-L-methionine = 2-methyladenosine(37) in tRNA + 5'-deoxyadenosine + L-methionine + 2 oxidized [2Fe-2S]-[ferredoxin] + S-adenosyl-L-homocysteine. Its function is as follows. Specifically methylates position 2 of adenine 2503 in 23S rRNA and position 2 of adenine 37 in tRNAs. This chain is Probable dual-specificity RNA methyltransferase RlmN, found in Chlorobaculum tepidum (strain ATCC 49652 / DSM 12025 / NBRC 103806 / TLS) (Chlorobium tepidum).